A 250-amino-acid polypeptide reads, in one-letter code: Pyrroloquinoline-quinone synthase (250 aa).

Belongs to the PqqC family.

It carries out the reaction 6-(2-amino-2-carboxyethyl)-7,8-dioxo-1,2,3,4,7,8-hexahydroquinoline-2,4-dicarboxylate + 3 O2 = pyrroloquinoline quinone + 2 H2O2 + 2 H2O + H(+). Its pathway is cofactor biosynthesis; pyrroloquinoline quinone biosynthesis. In terms of biological role, ring cyclization and eight-electron oxidation of 3a-(2-amino-2-carboxyethyl)-4,5-dioxo-4,5,6,7,8,9-hexahydroquinoline-7,9-dicarboxylic-acid to PQQ. This chain is Pyrroloquinoline-quinone synthase, found in Xanthomonas campestris pv. campestris (strain 8004).